The chain runs to 337 residues: Dihydroorotate dehydrogenase (quinone) (337 aa).

Residues 62–66 and T86 each bind FMN; that span reads AGLDK. K66 contacts substrate. 111 to 115 lines the substrate pocket; it reads NRMGF. Positions 140 and 173 each coordinate FMN. N173 lines the substrate pocket. S176 acts as the Nucleophile in catalysis. N178 lines the substrate pocket. Positions 218 and 246 each coordinate FMN. 247–248 provides a ligand contact to substrate; that stretch reads NT. FMN-binding positions include G269, G298, and 319-320; that span reads YS.

Belongs to the dihydroorotate dehydrogenase family. Type 2 subfamily. In terms of assembly, monomer. FMN is required as a cofactor.

It is found in the cell membrane. It catalyses the reaction (S)-dihydroorotate + a quinone = orotate + a quinol. It functions in the pathway pyrimidine metabolism; UMP biosynthesis via de novo pathway; orotate from (S)-dihydroorotate (quinone route): step 1/1. Catalyzes the conversion of dihydroorotate to orotate with quinone as electron acceptor. The sequence is that of Dihydroorotate dehydrogenase (quinone) from Wigglesworthia glossinidia brevipalpis.